The primary structure comprises 246 residues: Transcription factor MYB113 (246 aa).

2 HTH myb-type domains span residues 5-61 (PKGL…KPSI) and 62-112 (KRGK…SKKH). DNA-binding regions (H-T-H motif) lie at residues 33–57 (WHRV…LNYL) and 85–108 (WSLI…NTHL).

Interacts with BHLH002/EGL3/MYC146, BHLH012/MYC1 and BHLH042/TT8.

The protein localises to the nucleus. Functionally, transcription activator, when associated with BHLH002/EGL3/MYC146, BHLH012/MYC1, or BHLH042/TT8. In Arabidopsis thaliana (Mouse-ear cress), this protein is Transcription factor MYB113 (MYB113).